The primary structure comprises 113 residues: Putative pterin-4-alpha-carbinolamine dehydratase (113 aa).

It belongs to the pterin-4-alpha-carbinolamine dehydratase family.

The catalysed reaction is (4aS,6R)-4a-hydroxy-L-erythro-5,6,7,8-tetrahydrobiopterin = (6R)-L-erythro-6,7-dihydrobiopterin + H2O. This chain is Putative pterin-4-alpha-carbinolamine dehydratase, found in Hydrogenovibrio crunogenus (strain DSM 25203 / XCL-2) (Thiomicrospira crunogena).